Consider the following 257-residue polypeptide: MEFIDNIRYKKIKNAVGRAVADFGLIRDGDRIAVAVSGGKDSYTLLHILEGLRRRAPVKYELVAVTIDSGYPGFRSDVIASYLREQGFAHHLETTDHYDIIREKRRPGSSYCSICARLKRGVLYTLAQKLGCNKLALGHHLDDFVETLLLNQFFVGTLKAMAPRMLADNGETTVIRPLVYVEEREIIPFARENRFPVVCCSCPVCGTADLQRRRMKKLLTELEKENPAVKRSLLRALGNVQPRYLLDLELQRLCDVP.

Residues 37–42 carry the PP-loop motif motif; it reads SGGKDS. 3 residues coordinate [4Fe-4S] cluster: C112, C115, and C202.

The protein belongs to the TtcA family. In terms of assembly, homodimer. It depends on Mg(2+) as a cofactor. Requires [4Fe-4S] cluster as cofactor.

The protein localises to the cytoplasm. It carries out the reaction cytidine(32) in tRNA + S-sulfanyl-L-cysteinyl-[cysteine desulfurase] + AH2 + ATP = 2-thiocytidine(32) in tRNA + L-cysteinyl-[cysteine desulfurase] + A + AMP + diphosphate + H(+). It participates in tRNA modification. Functionally, catalyzes the ATP-dependent 2-thiolation of cytidine in position 32 of tRNA, to form 2-thiocytidine (s(2)C32). The sulfur atoms are provided by the cysteine/cysteine desulfurase (IscS) system. The polypeptide is tRNA-cytidine(32) 2-sulfurtransferase (Geobacter sulfurreducens (strain ATCC 51573 / DSM 12127 / PCA)).